The following is a 135-amino-acid chain: Transcription antitermination protein NusB (135 aa).

This sequence belongs to the NusB family.

Functionally, involved in transcription antitermination. Required for transcription of ribosomal RNA (rRNA) genes. Binds specifically to the boxA antiterminator sequence of the ribosomal RNA (rrn) operons. The polypeptide is Transcription antitermination protein NusB (Shewanella halifaxensis (strain HAW-EB4)).